Here is a 467-residue protein sequence, read N- to C-terminus: Ribulose bisphosphate carboxylase large chain (467 aa).

A propeptide spanning residues 1 to 2 (MS) is cleaved from the precursor. The residue at position 3 (proline 3) is an N-acetylproline. Residue lysine 14 is modified to N6,N6,N6-trimethyllysine. Substrate contacts are provided by asparagine 123 and threonine 173. Lysine 175 functions as the Proton acceptor in the catalytic mechanism. Residue lysine 177 coordinates substrate. Mg(2+) contacts are provided by lysine 201, aspartate 203, and glutamate 204. At lysine 201 the chain carries N6-carboxylysine. The active-site Proton acceptor is the histidine 294. Positions 295, 327, and 379 each coordinate substrate.

Belongs to the RuBisCO large chain family. Type I subfamily. As to quaternary structure, heterohexadecamer of 8 large chains and 8 small chains; disulfide-linked. The disulfide link is formed within the large subunit homodimers. It depends on Mg(2+) as a cofactor. The disulfide bond which can form in the large chain dimeric partners within the hexadecamer appears to be associated with oxidative stress and protein turnover.

It is found in the plastid. The protein resides in the chloroplast. The enzyme catalyses 2 (2R)-3-phosphoglycerate + 2 H(+) = D-ribulose 1,5-bisphosphate + CO2 + H2O. It carries out the reaction D-ribulose 1,5-bisphosphate + O2 = 2-phosphoglycolate + (2R)-3-phosphoglycerate + 2 H(+). Its function is as follows. RuBisCO catalyzes two reactions: the carboxylation of D-ribulose 1,5-bisphosphate, the primary event in carbon dioxide fixation, as well as the oxidative fragmentation of the pentose substrate in the photorespiration process. Both reactions occur simultaneously and in competition at the same active site. This Serenoa repens (Saw palmetto) protein is Ribulose bisphosphate carboxylase large chain.